The primary structure comprises 486 residues: Protein nucleotidyltransferase YdiU (486 aa).

ATP is bound by residues Gly90, Gly92, Arg93, Lys113, Asp125, Gly126, Arg176, and Arg183. The active-site Proton acceptor is the Asp252. Residues Asn253 and Asp262 each coordinate Mg(2+). Asp262 contributes to the ATP binding site.

It belongs to the SELO family. Mg(2+) is required as a cofactor. It depends on Mn(2+) as a cofactor.

The catalysed reaction is L-seryl-[protein] + ATP = 3-O-(5'-adenylyl)-L-seryl-[protein] + diphosphate. The enzyme catalyses L-threonyl-[protein] + ATP = 3-O-(5'-adenylyl)-L-threonyl-[protein] + diphosphate. It catalyses the reaction L-tyrosyl-[protein] + ATP = O-(5'-adenylyl)-L-tyrosyl-[protein] + diphosphate. It carries out the reaction L-histidyl-[protein] + UTP = N(tele)-(5'-uridylyl)-L-histidyl-[protein] + diphosphate. The catalysed reaction is L-seryl-[protein] + UTP = O-(5'-uridylyl)-L-seryl-[protein] + diphosphate. The enzyme catalyses L-tyrosyl-[protein] + UTP = O-(5'-uridylyl)-L-tyrosyl-[protein] + diphosphate. Functionally, nucleotidyltransferase involved in the post-translational modification of proteins. It can catalyze the addition of adenosine monophosphate (AMP) or uridine monophosphate (UMP) to a protein, resulting in modifications known as AMPylation and UMPylation. This Pseudomonas paraeruginosa (strain DSM 24068 / PA7) (Pseudomonas aeruginosa (strain PA7)) protein is Protein nucleotidyltransferase YdiU.